Reading from the N-terminus, the 151-residue chain is Protein Smg homolog (151 aa).

This sequence belongs to the Smg family.

The sequence is that of Protein Smg homolog from Laribacter hongkongensis (strain HLHK9).